The primary structure comprises 2059 residues: Large tegument protein deneddylase (2059 aa).

The segment at 1-230 (MRIIAGSTNQ…PDIALSLNDF (230 aa)) is deubiquitination activity. The Peptidase C76 domain maps to 3 to 220 (IIAGSTNQND…TILILKTYKD (218 aa)). Active-site residues include C23, D155, and H157. Residues 245–272 (TNTLISKQSPSKRKQEKTSLNSNSLEKK) are disordered. Position 278 (S278) is a region of interest, interaction with inner tegument protein.

This sequence belongs to the herpesviridae large tegument protein family. As to quaternary structure, interacts with host CUL1 and CUL4A; these interactions inhibit the E3 ligase activity of cullins. Interacts with inner tegument protein. Interacts with capsid vertex specific component CVC2. Interacts with the major capsid protein/MCP.

The protein resides in the virion tegument. Its subcellular location is the host cytoplasm. It localises to the host nucleus. It carries out the reaction Thiol-dependent hydrolysis of ester, thioester, amide, peptide and isopeptide bonds formed by the C-terminal Gly of ubiquitin (a 76-residue protein attached to proteins as an intracellular targeting signal).. In terms of biological role, large tegument protein that plays multiple roles in the viral cycle. During viral entry, remains associated with the capsid while most of the tegument is detached and participates in the capsid transport toward the host nucleus. Plays a role in the routing of the capsid at the nuclear pore complex and subsequent uncoating. Within the host nucleus, acts as a deneddylase and promotes the degradation of nuclear CRLs (cullin-RING ubiquitin ligases) and thereby stabilizes nuclear CRL substrates, while cytoplasmic CRLs remain unaffected. These modifications prevent host cell cycle S-phase progression and create a favorable environment allowing efficient viral genome replication. Participates later in the secondary envelopment of capsids. Indeed, plays a linker role for the association of the outer viral tegument to the capsids together with the inner tegument protein. The sequence is that of Large tegument protein deneddylase (U31) from Human herpesvirus 7 (strain JI) (HHV-7).